The chain runs to 100 residues: Large ribosomal subunit protein uL23 (100 aa).

The protein belongs to the universal ribosomal protein uL23 family. As to quaternary structure, part of the 50S ribosomal subunit. Contacts protein L29, and trigger factor when it is bound to the ribosome.

One of the early assembly proteins it binds 23S rRNA. One of the proteins that surrounds the polypeptide exit tunnel on the outside of the ribosome. Forms the main docking site for trigger factor binding to the ribosome. The polypeptide is Large ribosomal subunit protein uL23 (Yersinia pestis bv. Antiqua (strain Antiqua)).